Reading from the N-terminus, the 1228-residue chain is Probable phospholipid-transporting ATPase 5 (1228 aa).

At 1–74 the chain is on the cytoplasmic side; sequence MARGRIRSKL…TTRYNLITFF (74 aa). Residues 75 to 96 form a helical membrane-spanning segment; that stretch reads PKSLYEQFHRAANLYFLVAAIL. Residues 97–100 lie on the Extracellular side of the membrane; that stretch reads SVFP. The helical transmembrane segment at 101–123 threads the bilayer; that stretch reads LSPFNKWSMIAPLVFVVGLSMLK. Residues 124 to 305 lie on the Cytoplasmic side of the membrane; that stretch reads EALEDWRRFM…SRIERTMDYI (182 aa). Residues 306-327 traverse the membrane as a helical segment; that stretch reads IYTLLVLLILISCISSSGFAWE. Residues 328–359 lie on the Extracellular side of the membrane; the sequence is TEFHMPKMWYLRPGEPIDFTNPINPIYAGVVH. A helical membrane pass occupies residues 360–377; it reads LITALLLYGYLIPISLYV. Residues 378-934 are Cytoplasmic-facing; the sequence is SIEVVKVWQA…HGHWCYKRIA (557 aa). Asp425 acts as the 4-aspartylphosphate intermediate in catalysis. A Glycyl lysine isopeptide (Lys-Gly) (interchain with G-Cter in ubiquitin) cross-link involves residue Lys616. Residues Asp879 and Asp883 each coordinate Mg(2+). Residues 935–954 form a helical membrane-spanning segment; that stretch reads QMICYFFYKNIAFGLTLFYF. At 955-968 the chain is on the extracellular side; it reads EAFTGFSGQSVYND. The chain crosses the membrane as a helical span at residues 969–988; sequence YYLLLFNVVLTSLPVIALGV. The Cytoplasmic segment spans residues 989-1018; that stretch reads FEQDVSSEICLQFPALYQQGTKNLFFDWSR. Residues 1019 to 1041 traverse the membrane as a helical segment; the sequence is ILGWMCNGVYASLVIFFLNIGII. Topologically, residues 1042–1054 are extracellular; it reads YSQAFRDNGQTAD. Residues 1055–1077 form a helical membrane-spanning segment; it reads MDAVGTTMFTCIIWAANVQIALT. Residues 1078-1083 lie on the Cytoplasmic side of the membrane; that stretch reads MSHFTW. A helical transmembrane segment spans residues 1084–1104; that stretch reads IQHVLIWGSIGMWYLFVAIYS. Residues 1105–1117 lie on the Extracellular side of the membrane; the sequence is MMPPSYSGNIYRI. A helical membrane pass occupies residues 1118-1146; sequence LDEILAPAPIYWMATLLVTVAAVLPYVAH. The Cytoplasmic portion of the chain corresponds to 1147 to 1228; the sequence is IAFQRFLNPL…AQDAMSPRSL (82 aa).

It belongs to the cation transport ATPase (P-type) (TC 3.A.3) family. Type IV subfamily.

The protein resides in the membrane. The enzyme catalyses ATP + H2O + phospholipidSide 1 = ADP + phosphate + phospholipidSide 2.. Functionally, involved in transport of phospholipids. The polypeptide is Probable phospholipid-transporting ATPase 5 (Arabidopsis thaliana (Mouse-ear cress)).